A 196-amino-acid chain; its full sequence is UMP-CMP kinase (196 aa).

Residue 13 to 18 (GAGKGT) participates in ATP binding. An NMP region spans residues 33–63 (SAGDLLREERSRTDSEFGQLIDSYIKEGKIV). A ribonucleoside 5'-phosphate contacts are provided by residues Arg-39, 61 to 63 (KIV), and 93 to 96 (GFPR). Asn-100 contacts CMP. Positions 133-143 (ERGKSSGRTDD) are LID. Arg-134 provides a ligand contact to ATP. Residues Arg-140 and Arg-151 each contribute to the a ribonucleoside 5'-phosphate site. Arg-179 is a binding site for ATP.

Belongs to the adenylate kinase family. UMP-CMP kinase subfamily. As to quaternary structure, monomer. The cofactor is Mg(2+).

The protein resides in the nucleus. It is found in the cytoplasm. It catalyses the reaction CMP + ATP = CDP + ADP. The catalysed reaction is dCMP + ATP = dCDP + ADP. The enzyme catalyses UMP + ATP = UDP + ADP. It carries out the reaction a 2'-deoxyribonucleoside 5'-diphosphate + ATP = a 2'-deoxyribonucleoside 5'-triphosphate + ADP. It catalyses the reaction a ribonucleoside 5'-diphosphate + ATP = a ribonucleoside 5'-triphosphate + ADP. In terms of biological role, catalyzes the phosphorylation of pyrimidine nucleoside monophosphates at the expense of ATP. Plays an important role in de novo pyrimidine nucleotide biosynthesis. Has preference for UMP and CMP as phosphate acceptors. Also displays broad nucleoside diphosphate kinase activity. This Danio rerio (Zebrafish) protein is UMP-CMP kinase (cmpk).